The primary structure comprises 506 residues: Probable cytochrome P450 519E1 (506 aa).

Residues 1–21 traverse the membrane as a helical segment; sequence MGIGLIILYLLIGLLAYDFTK. A heme-binding site is contributed by C453.

This sequence belongs to the cytochrome P450 family. It depends on heme as a cofactor.

The protein resides in the membrane. The sequence is that of Probable cytochrome P450 519E1 (cyp519E1) from Dictyostelium discoideum (Social amoeba).